A 332-amino-acid chain; its full sequence is 4-hydroxy-3-methylbut-2-enyl diphosphate reductase (332 aa).

C34 is a binding site for [4Fe-4S] cluster. The (2E)-4-hydroxy-3-methylbut-2-enyl diphosphate site is built by H63 and H96. Dimethylallyl diphosphate-binding residues include H63 and H96. The isopentenyl diphosphate site is built by H63 and H96. Position 118 (C118) interacts with [4Fe-4S] cluster. H146 contributes to the (2E)-4-hydroxy-3-methylbut-2-enyl diphosphate binding site. H146 contributes to the dimethylallyl diphosphate binding site. H146 provides a ligand contact to isopentenyl diphosphate. The active-site Proton donor is E148. T186 contacts (2E)-4-hydroxy-3-methylbut-2-enyl diphosphate. Residue C216 coordinates [4Fe-4S] cluster. Residues S244, S245, N246, and S289 each contribute to the (2E)-4-hydroxy-3-methylbut-2-enyl diphosphate site. 4 residues coordinate dimethylallyl diphosphate: S244, S245, N246, and S289. Positions 244, 245, 246, and 289 each coordinate isopentenyl diphosphate.

Belongs to the IspH family. [4Fe-4S] cluster is required as a cofactor.

It carries out the reaction isopentenyl diphosphate + 2 oxidized [2Fe-2S]-[ferredoxin] + H2O = (2E)-4-hydroxy-3-methylbut-2-enyl diphosphate + 2 reduced [2Fe-2S]-[ferredoxin] + 2 H(+). The catalysed reaction is dimethylallyl diphosphate + 2 oxidized [2Fe-2S]-[ferredoxin] + H2O = (2E)-4-hydroxy-3-methylbut-2-enyl diphosphate + 2 reduced [2Fe-2S]-[ferredoxin] + 2 H(+). It participates in isoprenoid biosynthesis; dimethylallyl diphosphate biosynthesis; dimethylallyl diphosphate from (2E)-4-hydroxy-3-methylbutenyl diphosphate: step 1/1. Its pathway is isoprenoid biosynthesis; isopentenyl diphosphate biosynthesis via DXP pathway; isopentenyl diphosphate from 1-deoxy-D-xylulose 5-phosphate: step 6/6. Its function is as follows. Catalyzes the conversion of 1-hydroxy-2-methyl-2-(E)-butenyl 4-diphosphate (HMBPP) into a mixture of isopentenyl diphosphate (IPP) and dimethylallyl diphosphate (DMAPP). Acts in the terminal step of the DOXP/MEP pathway for isoprenoid precursor biosynthesis. This chain is 4-hydroxy-3-methylbut-2-enyl diphosphate reductase, found in Mycobacterium leprae (strain TN).